The chain runs to 774 residues: Lysyl oxidase homolog 2 (774 aa).

A signal peptide spans Met1 to Ala25. 4 consecutive SRCR domains span residues Leu58–Ser159, Ile188–Val302, Val326–Asn425, and Leu435–Ser544. Intrachain disulfides connect Cys84/Cys148, Cys97/Cys158, Cys128/Cys138, Cys218/Cys291, Cys231/Cys301, Cys265/Cys275, Cys351/Cys414, Cys364/Cys424, and Cys395/Cys405. The N-linked (GlcNAc...) asparagine glycan is linked to Asn288. The N-linked (GlcNAc...) (complex) asparagine glycan is linked to Asn455. 3 cysteine pairs are disulfide-bonded: Cys464–Cys530, Cys477–Cys543, and Cys511–Cys521. The tract at residues Pro548–Ser751 is lysyl-oxidase like. Ca(2+) contacts are provided by Asp549 and Leu550. Disulfide bonds link Cys573-Cys625, Cys579-Cys695, Cys657-Cys673, and Cys663-Cys685. His626, His628, and His630 together coordinate Cu cation. Asn644 is a glycosylation site (N-linked (GlcNAc...) (complex) asparagine). Residues Lys653–Tyr689 constitute a cross-link (lysine tyrosylquinone (Lys-Tyr)). Tyr689 bears the 2',4',5'-topaquinone mark. Ca(2+)-binding residues include Glu722, Asp724, Asn727, and Asn728. A disulfide bridge connects residues Cys732 and Cys746.

This sequence belongs to the lysyl oxidase family. As to quaternary structure, component of some chromatin repressor complex. Interacts with SNAI1. Interacts with TAF10. Interacts with HSPA5. Interacts with EFEMP2. Cu cation is required as a cofactor. Requires lysine tyrosylquinone residue as cofactor. In terms of processing, the lysine tyrosylquinone cross-link (LTQ) is generated by condensation of the epsilon-amino group of a lysine with a topaquinone produced by oxidation of tyrosine. N-glycosylated. N-glycosylation on Asn-455 and Asn-644 may be essential for proper folding and secretion; may be composed of a fucosylated carbohydrates attached to a trimannose N-linked glycan core. In terms of tissue distribution, expressed in many tissues. Highest expression in reproductive tissues, placenta, uterus and prostate. In esophageal epithelium, expressed in the basal, prickle and granular cell layers. Up-regulated in a number of cancers cells and tissues.

It is found in the secreted. Its subcellular location is the extracellular space. The protein localises to the extracellular matrix. It localises to the basement membrane. The protein resides in the nucleus. It is found in the chromosome. Its subcellular location is the endoplasmic reticulum. The enzyme catalyses L-lysyl-[protein] + O2 + H2O = (S)-2-amino-6-oxohexanoyl-[protein] + H2O2 + NH4(+). According to some reports, it is inhibited by beta-aminopropionitrile (BAPN). According to another report, it is not inhibited by beta-aminopropionitrile (BAPN). Specifically inhibited by a mouse monoclonal antibody AB0023, inhibition occurs in a non-competitive manner. In terms of biological role, mediates the post-translational oxidative deamination of lysine residues on target proteins leading to the formation of deaminated lysine (allysine). Acts as a transcription corepressor and specifically mediates deamination of trimethylated 'Lys-4' of histone H3 (H3K4me3), a specific tag for epigenetic transcriptional activation. Shows no activity against histone H3 when it is trimethylated on 'Lys-9' (H3K9me3) or 'Lys-27' (H3K27me3) or when 'Lys-4' is monomethylated (H3K4me1) or dimethylated (H3K4me2). Also mediates deamination of methylated TAF10, a member of the transcription factor IID (TFIID) complex, which induces release of TAF10 from promoters, leading to inhibition of TFIID-dependent transcription. LOXL2-mediated deamination of TAF10 results in transcriptional repression of genes required for embryonic stem cell pluripotency including POU5F1/OCT4, NANOG, KLF4 and SOX2. Involved in epithelial to mesenchymal transition (EMT) via interaction with SNAI1 and participates in repression of E-cadherin CDH1, probably by mediating deamination of histone H3. During EMT, involved with SNAI1 in negatively regulating pericentromeric heterochromatin transcription. SNAI1 recruits LOXL2 to pericentromeric regions to oxidize histone H3 and repress transcription which leads to release of heterochromatin component CBX5/HP1A, enabling chromatin reorganization and acquisition of mesenchymal traits. Interacts with the endoplasmic reticulum protein HSPA5 which activates the IRE1-XBP1 pathway of the unfolded protein response, leading to expression of several transcription factors involved in EMT and subsequent EMT induction. Involved in E-cadherin repression following hypoxia, a hallmark of EMT believed to amplify tumor aggressiveness, suggesting that it may play a role in tumor progression. When secreted into the extracellular matrix, promotes cross-linking of extracellular matrix proteins by mediating oxidative deamination of peptidyl lysine residues in precursors to fibrous collagen and elastin. Acts as a regulator of sprouting angiogenesis, probably via collagen IV scaffolding. Acts as a regulator of chondrocyte differentiation, probably by regulating expression of factors that control chondrocyte differentiation. This chain is Lysyl oxidase homolog 2 (LOXL2), found in Homo sapiens (Human).